Reading from the N-terminus, the 359-residue chain is 3-dehydroquinate synthase (359 aa).

NAD(+)-binding positions include 71–76 (DGEAHK), 105–109 (GVIGD), 129–130 (TT), lysine 142, lysine 151, and 169–172 (TLHT). 3 residues coordinate Zn(2+): glutamate 184, histidine 247, and histidine 264.

This sequence belongs to the sugar phosphate cyclases superfamily. Dehydroquinate synthase family. The cofactor is NAD(+). Co(2+) is required as a cofactor. Requires Zn(2+) as cofactor.

It is found in the cytoplasm. The catalysed reaction is 7-phospho-2-dehydro-3-deoxy-D-arabino-heptonate = 3-dehydroquinate + phosphate. It functions in the pathway metabolic intermediate biosynthesis; chorismate biosynthesis; chorismate from D-erythrose 4-phosphate and phosphoenolpyruvate: step 2/7. Functionally, catalyzes the conversion of 3-deoxy-D-arabino-heptulosonate 7-phosphate (DAHP) to dehydroquinate (DHQ). In Neisseria meningitidis serogroup B (strain ATCC BAA-335 / MC58), this protein is 3-dehydroquinate synthase.